The following is a 387-amino-acid chain: Zinc transporter 7 (387 aa).

At 1–37 the chain is on the cytoplasmic side; it reads MLPLSIKDDEYKPAKFNLVVKLSGWFRSILADKTSRN. A helical membrane pass occupies residues 38-58; that stretch reads LFFFLCLNLSFAFVELLYGIW. Over 59 to 67 the chain is Lumenal; sequence SNSLGLISD. The chain crosses the membrane as a helical span at residues 68 to 88; sequence SFHMFFDCTALLAGLAASVIS. Topologically, residues 89–102 are cytoplasmic; that stretch reads RWRSNDSFSYGYVR. Residues 103-123 traverse the membrane as a helical segment; that stretch reads AEVLAGFVNGLFLIFTAFFIF. Over 124–140 the chain is Lumenal; the sequence is SEGVERALEPPDVHHDR. A helical transmembrane segment spans residues 141 to 161; the sequence is LLPVSIAGLLVNLVGIFVFQH. Positions 161–232 are his-rich loop; it reads HGGHGHSHGG…HDDQHCHDDH (72 aa). Topologically, residues 162–247 are cytoplasmic; sequence GGHGHSHGGD…KGSSKQILQG (86 aa). The segment at 167 to 237 is disordered; it reads SHGGDDHGHS…CHDDHTLTPG (71 aa). Over residues 187–201 the composition is skewed to basic residues; that stretch reads GHSHGGHGHSHGGHG. 2 stretches are compositionally biased toward basic and acidic residues: residues 202–214 and 221–233; these read HSHESKHGHDHGH and HSHDDQHCHDDHT. Residues 248 to 268 traverse the membrane as a helical segment; that stretch reads VFLHIVADTLGSVGVIISAIL. Residues 269–273 lie on the Lumenal side of the membrane; the sequence is MQKYD. Residues 274–294 form a helical membrane-spanning segment; sequence LMIADPICSMLIALLIGVSVV. Residues 295–387 are Cytoplasmic-facing; sequence PLLRESIGIL…LYVQIEVAAM (93 aa).

It belongs to the cation diffusion facilitator (CDF) transporter (TC 2.A.4) family. SLC30A subfamily. In terms of assembly, homooligomer.

It is found in the golgi apparatus membrane. Its subcellular location is the cytoplasmic vesicle. The protein localises to the golgi apparatus. The protein resides in the trans-Golgi network. It localises to the sarcoplasmic reticulum. It is found in the mitochondrion. The enzyme catalyses Zn(2+)(in) = Zn(2+)(out). Functionally, zinc ion transporter mediating zinc entry from the cytosol into the lumen of organelles along the secretory pathway. By contributing to zinc ion homeostasis within the early secretory pathway, regulates the activation and folding of enzymes like alkaline phosphatases. The sequence is that of Zinc transporter 7 (slc30a7) from Danio rerio (Zebrafish).